Consider the following 122-residue polypeptide: Small ribosomal subunit protein uS13 (122 aa).

The segment at 95 to 122 is disordered; the sequence is GLPVHGQRTHTNARTRKGPRKGAVGKKK.

It belongs to the universal ribosomal protein uS13 family. Part of the 30S ribosomal subunit. Forms a loose heterodimer with protein S19. Forms two bridges to the 50S subunit in the 70S ribosome.

Functionally, located at the top of the head of the 30S subunit, it contacts several helices of the 16S rRNA. In the 70S ribosome it contacts the 23S rRNA (bridge B1a) and protein L5 of the 50S subunit (bridge B1b), connecting the 2 subunits; these bridges are implicated in subunit movement. Contacts the tRNAs in the A and P-sites. The polypeptide is Small ribosomal subunit protein uS13 (Lawsonia intracellularis (strain PHE/MN1-00)).